Consider the following 338-residue polypeptide: D-erythrose-4-phosphate dehydrogenase (338 aa).

Position 12–13 (12–13) interacts with NAD(+); that stretch reads RI. Residues 154 to 156, Arg200, 213 to 214, and Arg236 contribute to the substrate site; these read SCT and TK. Catalysis depends on Cys155, which acts as the Nucleophile. Asn318 serves as a coordination point for NAD(+).

This sequence belongs to the glyceraldehyde-3-phosphate dehydrogenase family. Epd subfamily. In terms of assembly, homotetramer.

Its subcellular location is the cytoplasm. It carries out the reaction D-erythrose 4-phosphate + NAD(+) + H2O = 4-phospho-D-erythronate + NADH + 2 H(+). It participates in cofactor biosynthesis; pyridoxine 5'-phosphate biosynthesis; pyridoxine 5'-phosphate from D-erythrose 4-phosphate: step 1/5. In terms of biological role, catalyzes the NAD-dependent conversion of D-erythrose 4-phosphate to 4-phosphoerythronate. The chain is D-erythrose-4-phosphate dehydrogenase from Yersinia enterocolitica serotype O:8 / biotype 1B (strain NCTC 13174 / 8081).